A 295-amino-acid chain; its full sequence is Large ribosomal subunit protein uL2 (295 aa).

A disordered region spans residues 243 to 295 (WRPHTRGTAMNPVDHPHGGGEGRTRGKHPESPWDGRRRDTRREGVRSTPISLS). Over residues 256-287 (DHPHGGGEGRTRGKHPESPWDGRRRDTRREGV) the composition is skewed to basic and acidic residues.

Belongs to the universal ribosomal protein uL2 family. As to quaternary structure, part of the 50S ribosomal subunit. Forms a bridge to the 30S subunit in the 70S ribosome.

One of the primary rRNA binding proteins. Required for association of the 30S and 50S subunits to form the 70S ribosome, for tRNA binding and peptide bond formation. It has been suggested to have peptidyltransferase activity; this is somewhat controversial. Makes several contacts with the 16S rRNA in the 70S ribosome. The protein is Large ribosomal subunit protein uL2 of Aquifex pyrophilus.